A 195-amino-acid polypeptide reads, in one-letter code: dITP/XTP pyrophosphatase (195 aa).

8 to 13 contacts substrate; sequence SGNAGK. The Mg(2+) site is built by glutamate 38 and aspartate 67. The active-site Proton acceptor is aspartate 67. Residues serine 68, 146–149, lysine 169, and 174–175 each bind substrate; these read FGYD and HR.

Belongs to the HAM1 NTPase family. Homodimer. It depends on Mg(2+) as a cofactor.

It catalyses the reaction XTP + H2O = XMP + diphosphate + H(+). The catalysed reaction is dITP + H2O = dIMP + diphosphate + H(+). It carries out the reaction ITP + H2O = IMP + diphosphate + H(+). Pyrophosphatase that catalyzes the hydrolysis of nucleoside triphosphates to their monophosphate derivatives, with a high preference for the non-canonical purine nucleotides XTP (xanthosine triphosphate), dITP (deoxyinosine triphosphate) and ITP. Seems to function as a house-cleaning enzyme that removes non-canonical purine nucleotides from the nucleotide pool, thus preventing their incorporation into DNA/RNA and avoiding chromosomal lesions. The sequence is that of dITP/XTP pyrophosphatase from Parasynechococcus marenigrum (strain WH8102).